A 123-amino-acid chain; its full sequence is UPF0382 membrane protein YwdK (123 aa).

Transmembrane regions (helical) follow at residues 3 to 23 (VFII…AFGA), 49 to 69 (ALGL…GSVT), 71 to 91 (AGWL…ILSV), and 96 to 116 (ILGA…IMIV).

Belongs to the UPF0382 family.

The protein resides in the cell membrane. The sequence is that of UPF0382 membrane protein YwdK (ywdK) from Bacillus subtilis (strain 168).